Consider the following 286-residue polypeptide: CCR4-NOT transcription complex subunit 7 (286 aa).

5 residues coordinate a divalent metal cation: Asp-40, Glu-42, Asp-161, Asp-230, and Glu-278.

This sequence belongs to the CAF1 family. As to quaternary structure, component of the CCR4-NOT complex. It depends on Mn(2+) as a cofactor. Requires Mg(2+) as cofactor. Co(2+) serves as cofactor.

The protein localises to the nucleus. It is found in the cytoplasm. The catalysed reaction is Exonucleolytic cleavage of poly(A) to 5'-AMP.. Its function is as follows. Has 3'-5' poly(A) exoribonuclease activity for synthetic poly(A) RNA substrate. Catalytic component of the CCR4-NOT complex which is one of the major cellular mRNA deadenylases and is linked to various cellular processes including bulk mRNA degradation, miRNA-mediated repression, translational repression during translational initiation and general transcription regulation. During miRNA-mediated repression the complex also seems to act as translational repressor during translational initiation. Additional complex functions may be a consequence of its influence on mRNA expression. This chain is CCR4-NOT transcription complex subunit 7 (cnot7), found in Danio rerio (Zebrafish).